A 335-amino-acid chain; its full sequence is Glycerol-3-phosphate dehydrogenase [NAD(P)+] (335 aa).

Residues Ser-12, Trp-13, and Lys-107 each coordinate NADPH. Lys-107, Gly-138, and Ser-140 together coordinate sn-glycerol 3-phosphate. Ala-142 is an NADPH binding site. The sn-glycerol 3-phosphate site is built by Lys-193, Asp-246, Ser-256, Arg-257, and Asn-258. Lys-193 (proton acceptor) is an active-site residue. Arg-257 serves as a coordination point for NADPH. Val-281 and Glu-283 together coordinate NADPH.

It belongs to the NAD-dependent glycerol-3-phosphate dehydrogenase family.

It localises to the cytoplasm. The enzyme catalyses sn-glycerol 3-phosphate + NAD(+) = dihydroxyacetone phosphate + NADH + H(+). It catalyses the reaction sn-glycerol 3-phosphate + NADP(+) = dihydroxyacetone phosphate + NADPH + H(+). The protein operates within membrane lipid metabolism; glycerophospholipid metabolism. In terms of biological role, catalyzes the reduction of the glycolytic intermediate dihydroxyacetone phosphate (DHAP) to sn-glycerol 3-phosphate (G3P), the key precursor for phospholipid synthesis. This is Glycerol-3-phosphate dehydrogenase [NAD(P)+] from Geobacter sp. (strain M21).